The chain runs to 315 residues: Glycine--tRNA ligase alpha subunit (315 aa).

It belongs to the class-II aminoacyl-tRNA synthetase family. Tetramer of two alpha and two beta subunits.

It localises to the cytoplasm. It carries out the reaction tRNA(Gly) + glycine + ATP = glycyl-tRNA(Gly) + AMP + diphosphate. This Pseudomonas entomophila (strain L48) protein is Glycine--tRNA ligase alpha subunit.